The primary structure comprises 214 residues: Pyridoxine/pyridoxamine 5'-phosphate oxidase (214 aa).

Substrate-binding positions include 9–12 (RRSY) and Lys-68. FMN contacts are provided by residues 63 to 68 (RVVLLK), 78 to 79 (YT), Lys-85, and Gln-107. Tyr-125, Arg-129, and Ser-133 together coordinate substrate. Residues 142-143 (QS) and Trp-187 each bind FMN. 193 to 195 (RLH) lines the substrate pocket. Arg-197 is an FMN binding site.

It belongs to the pyridoxamine 5'-phosphate oxidase family. Homodimer. FMN serves as cofactor.

It catalyses the reaction pyridoxamine 5'-phosphate + O2 + H2O = pyridoxal 5'-phosphate + H2O2 + NH4(+). The catalysed reaction is pyridoxine 5'-phosphate + O2 = pyridoxal 5'-phosphate + H2O2. Its pathway is cofactor metabolism; pyridoxal 5'-phosphate salvage; pyridoxal 5'-phosphate from pyridoxamine 5'-phosphate: step 1/1. The protein operates within cofactor metabolism; pyridoxal 5'-phosphate salvage; pyridoxal 5'-phosphate from pyridoxine 5'-phosphate: step 1/1. Catalyzes the oxidation of either pyridoxine 5'-phosphate (PNP) or pyridoxamine 5'-phosphate (PMP) into pyridoxal 5'-phosphate (PLP). This Christiangramia forsetii (strain DSM 17595 / CGMCC 1.15422 / KT0803) (Gramella forsetii) protein is Pyridoxine/pyridoxamine 5'-phosphate oxidase.